Consider the following 617-residue polypeptide: Proline--tRNA ligase (617 aa).

Belongs to the class-II aminoacyl-tRNA synthetase family. ProS type 1 subfamily. As to quaternary structure, homodimer.

It is found in the cytoplasm. It catalyses the reaction tRNA(Pro) + L-proline + ATP = L-prolyl-tRNA(Pro) + AMP + diphosphate. Functionally, catalyzes the attachment of proline to tRNA(Pro) in a two-step reaction: proline is first activated by ATP to form Pro-AMP and then transferred to the acceptor end of tRNA(Pro). As ProRS can inadvertently accommodate and process non-cognate amino acids such as alanine and cysteine, to avoid such errors it has two additional distinct editing activities against alanine. One activity is designated as 'pretransfer' editing and involves the tRNA(Pro)-independent hydrolysis of activated Ala-AMP. The other activity is designated 'posttransfer' editing and involves deacylation of mischarged Ala-tRNA(Pro). The misacylated Cys-tRNA(Pro) is not edited by ProRS. This is Proline--tRNA ligase from Streptococcus pneumoniae (strain CGSP14).